A 317-amino-acid chain; its full sequence is MARRSKGRQIDGIVLLDKDTGMSSNYALQRVKRFFNANKAGHTGALDPLATGMLPICLGEATKFSQHLLDADKRYLVTAKLGVRTDTSDSDGEVVQTRDINFTQAQLETALEHFRGDTMQVPSMFSALKHQGQPLYKYAREGIEVPREARPITVFELNFIKLEGDELTLDIHCSKGTYIRTITDDLGEMLGCGAHVIMLRRTQVADYPYDKMVSLADLEALVTQAQQQELAVGELLDPLLLPMDTAVANFPEINLPESMLYYVMQGQAVQASGLKIDVLVRITIGEQRKFVGIGIMNDDGLLAPKRLIVIPAEESPE.

D47 functions as the Nucleophile in the catalytic mechanism.

This sequence belongs to the pseudouridine synthase TruB family. Type 1 subfamily.

It carries out the reaction uridine(55) in tRNA = pseudouridine(55) in tRNA. Functionally, responsible for synthesis of pseudouridine from uracil-55 in the psi GC loop of transfer RNAs. In Shewanella denitrificans (strain OS217 / ATCC BAA-1090 / DSM 15013), this protein is tRNA pseudouridine synthase B.